The following is a 262-amino-acid chain: Large ribosomal subunit protein uL5c (262 aa).

Residues 1-39 (MASPSLLQSSASSFHGRFSPLAAPSSARMLSPPLRNVVK) constitute a chloroplast transit peptide.

Belongs to the universal ribosomal protein uL5 family. As to quaternary structure, part of the 50S ribosomal subunit; contacts the 5S rRNA.

The protein resides in the plastid. Its subcellular location is the chloroplast. Binds 5S rRNA, forms part of the central protuberance of the 50S subunit. This Arabidopsis thaliana (Mouse-ear cress) protein is Large ribosomal subunit protein uL5c (RPL5).